Here is a 205-residue protein sequence, read N- to C-terminus: Large ribosomal subunit protein uL4 (205 aa).

The segment at 43 to 95 is disordered; the sequence is RSGNRAQKDRAEVKHSTKKPWRQKGTGRARAGMTSSPLWRGGGRAFPNSPEEN. Basic and acidic residues predominate over residues 48 to 57; sequence AQKDRAEVKH. Residues 58–69 are compositionally biased toward basic residues; the sequence is STKKPWRQKGTG.

This sequence belongs to the universal ribosomal protein uL4 family. As to quaternary structure, part of the 50S ribosomal subunit.

One of the primary rRNA binding proteins, this protein initially binds near the 5'-end of the 23S rRNA. It is important during the early stages of 50S assembly. It makes multiple contacts with different domains of the 23S rRNA in the assembled 50S subunit and ribosome. In terms of biological role, forms part of the polypeptide exit tunnel. The protein is Large ribosomal subunit protein uL4 of Bordetella pertussis (strain Tohama I / ATCC BAA-589 / NCTC 13251).